A 176-amino-acid polypeptide reads, in one-letter code: Centromere protein R (176 aa).

A Glycyl lysine isopeptide (Lys-Gly) (interchain with G-Cter in SUMO2) cross-link involves residue Lys-8. Ser-17 is subject to Phosphoserine. Residues 20–50 (PSKIMRKKSITAFSPTTGTYQLSPFSSPRTP) are DD1. Lys-22 participates in a covalent cross-link: Glycyl lysine isopeptide (Lys-Gly) (interchain with G-Cter in SUMO2). Ser-28 is subject to Phosphoserine. Residues 34–48 (PTTGTYQLSPFSSPR) are compositionally biased toward polar residues. The interval 34–80 (PTTGTYQLSPFSSPRTPKEQEHRDGPSNGTRKWSVLSSPARQDSTVK) is disordered. The segment covering 49 to 58 (TPKEQEHRDG) has biased composition (basic and acidic residues). The span at 60–80 (SNGTRKWSVLSSPARQDSTVK) shows a compositional bias: polar residues. A Nuclear localization signal motif is present at residues 63-66 (TRKW). Ser-71 carries the post-translational modification Phosphoserine. A coiled-coil region spans residues 82 to 112 (SDGFMMLLSKIERSSEKTMEIMKNLSSLQAL). The LXXLL motif motif lies at 118 to 122 (LEDLL). Residues 171–175 (LKAIL) carry the LXXIL motif motif.

Homodimer; mediated by the coiled coil domain. Interacts with CCNA2 and MTA1. Interacts with NFKB1 NF-kappa-B subunit. Component of the CENPA-CAD complex, composed of CENPI, CENPK, CENPL, CENPO, CENPP, CENPQ, CENPR and CENPS. The CENPA-CAD complex interacts with the CENPA-NAC complex, at least composed of CENPA, CENPC, CENPH, CENPM, CENPN, CENPT and CENPU. Interacts with TASOR.

It localises to the nucleus. It is found in the chromosome. Its subcellular location is the centromere. The protein localises to the kinetochore. Functionally, transcription coregulator that can have both coactivator and corepressor functions. Involved in the coactivation of nuclear receptors for retinoid X (RXRs) and thyroid hormone (TRs) in a ligand-dependent fashion. In contrast, it does not coactivate nuclear receptors for retinoic acid, vitamin D, progesterone receptor, nor glucocorticoid. Acts as a coactivator for estrogen receptor alpha. Acts as a transcriptional corepressor via its interaction with the NFKB1 NF-kappa-B subunit, possibly by interfering with the transactivation domain of NFKB1. Induces apoptosis in breast cancer cells, but not in other cancer cells, via a caspase-2 mediated pathway that involves mitochondrial membrane permeabilization but does not require other caspases. May also act as an inhibitor of cyclin A-associated kinase. Also acts a component of the CENPA-CAD (nucleosome distal) complex, a complex recruited to centromeres which is involved in assembly of kinetochore proteins, mitotic progression and chromosome segregation. May be involved in incorporation of newly synthesized CENPA into centromeres via its interaction with the CENPA-NAC complex. The sequence is that of Centromere protein R (Itgb3bp) from Rattus norvegicus (Rat).